A 134-amino-acid chain; its full sequence is Large ribosomal subunit protein uL22 (134 aa).

Belongs to the universal ribosomal protein uL22 family. As to quaternary structure, part of the 50S ribosomal subunit.

This protein binds specifically to 23S rRNA; its binding is stimulated by other ribosomal proteins, e.g. L4, L17, and L20. It is important during the early stages of 50S assembly. It makes multiple contacts with different domains of the 23S rRNA in the assembled 50S subunit and ribosome. Its function is as follows. The globular domain of the protein is located near the polypeptide exit tunnel on the outside of the subunit, while an extended beta-hairpin is found that lines the wall of the exit tunnel in the center of the 70S ribosome. This Porphyromonas gingivalis (strain ATCC 33277 / DSM 20709 / CIP 103683 / JCM 12257 / NCTC 11834 / 2561) protein is Large ribosomal subunit protein uL22.